Consider the following 314-residue polypeptide: Formimidoylglutamase (314 aa).

The Mn(2+) site is built by His127, Asp153, His155, Asp157, Asp245, and Asp247.

The protein belongs to the arginase family. Mn(2+) serves as cofactor.

The enzyme catalyses N-formimidoyl-L-glutamate + H2O = formamide + L-glutamate. Its pathway is amino-acid degradation; L-histidine degradation into L-glutamate; L-glutamate from N-formimidoyl-L-glutamate (hydrolase route): step 1/1. Functionally, catalyzes the conversion of N-formimidoyl-L-glutamate to L-glutamate and formamide. This Aeromonas salmonicida (strain A449) protein is Formimidoylglutamase.